Reading from the N-terminus, the 648-residue chain is Acetyl-coenzyme A synthetase (648 aa).

CoA-binding positions include 190–193 and Thr-310; that span reads RGGR. ATP is bound by residues 386 to 388, 410 to 415, Asp-499, and Arg-514; these read GEP and DTWWQT. Residue Ser-522 participates in CoA binding. Arg-525 is an ATP binding site. Val-536, His-538, and Val-541 together coordinate Mg(2+). Arg-583 lines the CoA pocket. At Lys-608 the chain carries N6-acetyllysine.

This sequence belongs to the ATP-dependent AMP-binding enzyme family. It depends on Mg(2+) as a cofactor. Post-translationally, acetylated. Deacetylation by the SIR2-homolog deacetylase activates the enzyme.

It carries out the reaction acetate + ATP + CoA = acetyl-CoA + AMP + diphosphate. Functionally, catalyzes the conversion of acetate into acetyl-CoA (AcCoA), an essential intermediate at the junction of anabolic and catabolic pathways. AcsA undergoes a two-step reaction. In the first half reaction, AcsA combines acetate with ATP to form acetyl-adenylate (AcAMP) intermediate. In the second half reaction, it can then transfer the acetyl group from AcAMP to the sulfhydryl group of CoA, forming the product AcCoA. This chain is Acetyl-coenzyme A synthetase, found in Methylobacterium radiotolerans (strain ATCC 27329 / DSM 1819 / JCM 2831 / NBRC 15690 / NCIMB 10815 / 0-1).